The sequence spans 109 residues: Parvalbumin beta (109 aa).

2 EF-hand domains span residues 38–73 (KSKD…FDGK) and 77–109 (LTDK…VTKG). Ca(2+) is bound by residues Asp-51, Asp-53, Ser-55, Tyr-57, Glu-59, Glu-62, Asp-90, Asp-92, Asp-94, Lys-96, and Glu-101.

The protein belongs to the parvalbumin family.

In terms of biological role, in muscle, parvalbumin is thought to be involved in relaxation after contraction. It binds two calcium ions. The polypeptide is Parvalbumin beta (Boa constrictor (Boa)).